The chain runs to 479 residues: Hydrogenase-4 component D (479 aa).

15 consecutive transmembrane segments (helical) span residues 3-23 (NLAL…SFSP), 30-50 (WGVL…SAFY), 55-75 (VAVT…LVID), 80-100 (LILF…TGYL), 117-137 (AFLL…TLLG), 168-188 (ALLI…TLFL), 208-228 (LVYG…PMQA), 238-258 (TPIS…YIFA), 270-290 (VIGG…FLMY), 300-320 (LAWS…LSIF), 330-350 (IAYI…AGAL), 369-389 (LPLP…VPPF), 390-410 (NGFF…VEYW), 411-431 (ILLP…AWFI), and 458-478 (LVLI…ATWL).

This sequence belongs to the complex I subunit 5 family.

It is found in the cell inner membrane. Possible component of hydrogenase 4. The chain is Hydrogenase-4 component D from Escherichia coli (strain K12).